The chain runs to 253 residues: MSTPFYVSPQQAMADRAEYARKGIARGRSLVVLQFADGIVFVGENPSRALHKFSEIYDRIGFAAAGKYNEYENLRIGGVRYADLRGYTYDRDDVTARGLANVYAQTLGTIFSSAAEKPYEVELVVAEVGETPEGDQIYRLPHDGSIVDEHGSVAVGGNAEQISTYLDQRHQDGMTLAEALKLAVQSLSRDTNGSEREIPAERLEVAVLDRTRPQQRKFKRIVGRELSRLLEAAGASTAGEAGSAEDEGSDDEK.

Residues 232–242 show a composition bias toward low complexity; it reads AAGASTAGEAG. Residues 232–253 are disordered; that stretch reads AAGASTAGEAGSAEDEGSDDEK. The span at 243 to 253 shows a compositional bias: acidic residues; the sequence is SAEDEGSDDEK.

This sequence belongs to the peptidase T1A family. As to quaternary structure, the 20S proteasome core is composed of 14 alpha and 14 beta subunits that assemble into four stacked heptameric rings, resulting in a barrel-shaped structure. The two inner rings, each composed of seven catalytic beta subunits, are sandwiched by two outer rings, each composed of seven alpha subunits. The catalytic chamber with the active sites is on the inside of the barrel. Has a gated structure, the ends of the cylinder being occluded by the N-termini of the alpha-subunits. Is capped by the proteasome-associated ATPase, ARC.

It localises to the cytoplasm. Its pathway is protein degradation; proteasomal Pup-dependent pathway. Its activity is regulated as follows. The formation of the proteasomal ATPase ARC-20S proteasome complex, likely via the docking of the C-termini of ARC into the intersubunit pockets in the alpha-rings, may trigger opening of the gate for substrate entry. Interconversion between the open-gate and close-gate conformations leads to a dynamic regulation of the 20S proteasome proteolysis activity. Component of the proteasome core, a large protease complex with broad specificity involved in protein degradation. This Streptomyces avermitilis (strain ATCC 31267 / DSM 46492 / JCM 5070 / NBRC 14893 / NCIMB 12804 / NRRL 8165 / MA-4680) protein is Proteasome subunit alpha.